Here is a 774-residue protein sequence, read N- to C-terminus: MAFSPWQILSPVQWAKWTWSAVRGSGAGEDEAGGPEGDPEEEEDSQAETKSLSFSSDSEGNFETPEAETPIRSPLKESCDSSPGLAEPEAKPQESREADEQLVAEVIEKCSPDTCSRSSENEAPQATVDSHPVKDVRGKAEHDVSKISVVRPFSIETRNCTDDPAALGTAAAHGCVPVLPGMALPSTTPEATQDEPVMDRGMGVTLEAFTEASLKTGGPCPEPVASRSKLRKPKPVSLRKKMAPEPEMLMEGSPLPKASSPWLPDGLDQNANPSVLRGSGAQRSPLNLKETAGVLSNDTSDSGVEVAPGSPPLQLEDDFTEDGENVKIRSALPKQSGRKPSNKLAPSIRKDGVSKPVGVEQPSDPTVQDALLDQMSPKLDPSKRSHPPANFFGSGPILQNSPPLSSKCSHHFDPNNINTDDSGDPCKPTPALTSSGFCPATGNHVNEILDSPKKAKSRLITSGCKVKKYEAQPLDLDACSQDEGAVISKISEIPNRDGHATDEEKLASTSSCAQKSAGAGVKGIEKETCQKMEKEELAVHGLLESSSEKAPVSVACGGESPLDGICLSEADKTAVLTLIREEIITKEIEANEWKKKYEETREEVLEMRKIVAEYEKTIAQMIEDEQRTSMSSQKSFQQLTMEKEQALADLNSVERSLSDLFRRYENLKGVLEGFKKNEEALKKCAQDYLARVKQEEQRYQALKVHAEEKLDRANEEIAQVRSKAKAESAALHAGLRKEQMKVESLERALQQKNQEIEELTKICDELIAKLGKTD.

Residue Ala2 is modified to N-acetylalanine. Positions 2–56 are interaction with LSM7 and SNRPG; sequence AFSPWQILSPVQWAKWTWSAVRGSGAGEDEAGGPEGDPEEEEDSQAETKSLSFSS. Ser4, Ser10, and Ser45 each carry phosphoserine. Residues 21–142 form a disordered region; it reads AVRGSGAGED…VKDVRGKAEH (122 aa). A compositionally biased stretch (acidic residues) spans 28 to 46; the sequence is GEDEAGGPEGDPEEEEDSQ. Polar residues predominate over residues 48–61; sequence ETKSLSFSSDSEGN. Basic and acidic residues predominate over residues 88 to 99; sequence PEAKPQESREAD. The span at 113 to 128 shows a compositional bias: polar residues; sequence DTCSRSSENEAPQATV. The span at 131 to 142 shows a compositional bias: basic and acidic residues; sequence HPVKDVRGKAEH. Ser148 and Ser154 each carry phosphoserine. The segment at 153–255 is interaction with TDRD7; that stretch reads FSIETRNCTD…PEMLMEGSPL (103 aa). The tract at residues 207–424 is interaction with YEATS4; it reads EAFTEASLKT…NNINTDDSGD (218 aa). Residues 214 to 428 are disordered; it reads LKTGGPCPEP…TDDSGDPCKP (215 aa). 2 consecutive SPAZ domains span residues 216 to 294 and 354 to 504; these read TGGP…TAGV and SKPV…TDEE. Residue Ser228 is modified to Phosphoserine; by AURKC. Over residues 228 to 241 the composition is skewed to basic residues; that stretch reads SKLRKPKPVSLRKK. 2 positions are modified to phosphoserine: Ser376 and Ser401. Residues 397–407 show a composition bias toward polar residues; the sequence is ILQNSPPLSSK. A Bipartite nuclear localization signal motif is present at residues 452-468; the sequence is PKKAKSRLITSGCKVKK. A phosphoserine mark is found at Ser480 and Ser560. Positions 579-774 form a coiled coil; that stretch reads IREEIITKEI…ELIAKLGKTD (196 aa). The segment at 670 to 774 is interaction with CH-TOG; that stretch reads VLEGFKKNEE…ELIAKLGKTD (105 aa).

It belongs to the TACC family. Interacts with CH-TOG and YEATS4. Interacts with the AURKA and AURKB and AURKC. Interacts with LSM7, TDRD7 and SNRPG. Interacts with GCN5L2 and PCAF. Interacts with the thyroid hormone receptors THRB and THRA, predominantly with isoform alpha-2. The interaction with THRA isoform alpha-1 and THRB is decreased in the presence of thyroid hormone T3. Interacts with RARA in the nucleus. Also interacts with other nuclear receptors, including ESR1, NR3C1, PPARG and RXRA, preferentially in the absence of their hormonal ligands.

It is found in the cytoplasm. The protein localises to the nucleus. It localises to the cytoskeleton. The protein resides in the microtubule organizing center. Its subcellular location is the centrosome. It is found in the midbody. Involved in transcription regulation induced by nuclear receptors, including in T3 thyroid hormone and all-trans retinoic acid pathways. Might promote the nuclear localization of the receptors. Likely involved in the processes that promote cell division prior to the formation of differentiated tissues. The protein is Transforming acidic coiled-coil-containing protein 1 (Tacc1) of Mus musculus (Mouse).